The primary structure comprises 333 residues: MPANYTCTRPDGDNTDFRYFIYAVTYTVILVPGLIGNILALWVFYGYMKETKRAVIFMINLAIADLLQVLSLPLRIFYYLNHDWPFGPGLCMFCFYLKYVNMYASIYFLVCISVRRFWFLMYPFRFHDCKQKYDLYISIAGWLIICLACVLFPLLRTSDDTSGNRTKCFVDLPTRNVNLAQSVVMMTIGELIGFVTPLLIVLYCTWKTVLSLQDKYPMAQDLGEKQKALKMILTCAGVFLICFAPYHFSFPLDFLVKSNEIKSCLARRVILIFHSVALCLASLNSCLDPVIYYFSTNEFRRRLSRQDLHDSIQLHAKSFVSNHTASTMTPELC.

Topologically, residues 1-27 (MPANYTCTRPDGDNTDFRYFIYAVTYT) are extracellular. N-linked (GlcNAc...) asparagine glycosylation occurs at Asn4. Residues 28-48 (VILVPGLIGNILALWVFYGYM) traverse the membrane as a helical segment. Topologically, residues 49–53 (KETKR) are cytoplasmic. A helical transmembrane segment spans residues 54 to 74 (AVIFMINLAIADLLQVLSLPL). The Extracellular portion of the chain corresponds to 75–91 (RIFYYLNHDWPFGPGLC). A disulfide bridge links Cys91 with Cys168. The helical transmembrane segment at 92-112 (MFCFYLKYVNMYASIYFLVCI) threads the bilayer. The Cytoplasmic portion of the chain corresponds to 113-134 (SVRRFWFLMYPFRFHDCKQKYD). The chain crosses the membrane as a helical span at residues 135-155 (LYISIAGWLIICLACVLFPLL). Over 156–182 (RTSDDTSGNRTKCFVDLPTRNVNLAQS) the chain is Extracellular. Residue Asn164 is glycosylated (N-linked (GlcNAc...) asparagine). A helical membrane pass occupies residues 183–203 (VVMMTIGELIGFVTPLLIVLY). Residues 204–231 (CTWKTVLSLQDKYPMAQDLGEKQKALKM) are Cytoplasmic-facing. Residues 232-252 (ILTCAGVFLICFAPYHFSFPL) form a helical membrane-spanning segment. Residues 253 to 269 (DFLVKSNEIKSCLARRV) lie on the Extracellular side of the membrane. Residues 270 to 290 (ILIFHSVALCLASLNSCLDPV) form a helical membrane-spanning segment. Residues 291–333 (IYYFSTNEFRRRLSRQDLHDSIQLHAKSFVSNHTASTMTPELC) are Cytoplasmic-facing.

The protein belongs to the G-protein coupled receptor 1 family. As to quaternary structure, interacts with GNA13. Interacts with CCL21.

It localises to the cell membrane. In terms of biological role, G-protein-coupled receptor of lysophosphatidylserine (LysoPS) that plays different roles in immune response. Plays a negative role in regulatory T-cell accumulation and homeostasis. Under inflammatory conditions where LysoPS production increases, contributes to the down-regulation of regulatory T-cell activity to favor effector response. Mediates the suppression of IL-2 production in activated T-lymphocytes leading to inhibition of growth, proliferation and differentiation of T-cells. Mechanistically, acts via G(s)-containing heterotrimeric G proteins to trigger elevated cyclic AMP levels and protein kinase A/PKA activity, which may in turn act to antagonize proximal TCR signaling. Plays an important role in the initial period of sepsis through the regulation of macrophage polarization and pro- and anti-inflammatory cytokine secretions. Upon testosterone treatment, acts as a receptor for CCL21 and subsequently triggers through G(q)-alpha and G(12)/G(13) proteins a calcium flux leading to chemotactic effects on activated B-cells. Signals via GNA13 and PKA to promote CD86 up-regulation by follicular B-cells. This chain is Probable G-protein coupled receptor 174 (GPR174), found in Homo sapiens (Human).